Here is a 2463-residue protein sequence, read N- to C-terminus: Protein TIC 214 (2463 aa).

Transmembrane regions (helical) follow at residues 18–38, 60–80, 86–106, 127–147, 170–190, and 297–317; these read VGLY…LFLL, FFTG…HLAL, ILLL…SGQW, LVFL…GRPM, FVGW…VFVW, and LFSI…PLLY. Residues 326-441 are a coiled coil; sequence QLQRKLSNET…AARAMQEAYK (116 aa). 5 disordered regions span residues 792 to 841, 1230 to 1249, 1393 to 1417, 2116 to 2136, and 2162 to 2187; these read AVPK…RKVN, SIQK…GPKK, SGGR…EQDF, EEEK…KLKK, and KQRA…RKVQ. Positions 794-830 are enriched in basic residues; that stretch reads PKKKKKISKSKQKNVKSKQKNVKSKQKNVKSKQKNVK. 3 stretches are compositionally biased toward basic and acidic residues: residues 832–841, 1231–1249, and 1397–1417; these read KQNEIKRKVN, IQKD…GPKK, and ETPE…EQDF. The stretch at 2049 to 2192 forms a coiled coil; that stretch reads WDALVASLKQ…KRKVQVQENK (144 aa). Positions 2124 to 2136 are enriched in basic residues; it reads KRKKERKKEKLKK.

Belongs to the TIC214 family. In terms of assembly, part of the Tic complex.

It localises to the plastid. Its subcellular location is the chloroplast inner membrane. Its function is as follows. Involved in protein precursor import into chloroplasts. May be part of an intermediate translocation complex acting as a protein-conducting channel at the inner envelope. This is Protein TIC 214 from Oenothera elata subsp. hookeri (Hooker's evening primrose).